A 300-amino-acid polypeptide reads, in one-letter code: Pantoate--beta-alanine ligase (300 aa).

An ATP-binding site is contributed by 43–50 (MGYLHSGH). His-50 acts as the Proton donor in catalysis. Gln-74 contributes to the (R)-pantoate binding site. Gln-74 contributes to the beta-alanine binding site. 162 to 165 (GQKD) is a binding site for ATP. Gln-168 provides a ligand contact to (R)-pantoate. ATP contacts are provided by residues Ile-191 and 199–202 (KSSR).

This sequence belongs to the pantothenate synthetase family. As to quaternary structure, homodimer.

The protein resides in the cytoplasm. It catalyses the reaction (R)-pantoate + beta-alanine + ATP = (R)-pantothenate + AMP + diphosphate + H(+). It participates in cofactor biosynthesis; (R)-pantothenate biosynthesis; (R)-pantothenate from (R)-pantoate and beta-alanine: step 1/1. Its function is as follows. Catalyzes the condensation of pantoate with beta-alanine in an ATP-dependent reaction via a pantoyl-adenylate intermediate. In Dictyostelium discoideum (Social amoeba), this protein is Pantoate--beta-alanine ligase (panC).